We begin with the raw amino-acid sequence, 630 residues long: Peptidyl-prolyl cis-trans isomerase cyp15 (630 aa).

A disordered region spans residues 1–46; that stretch reads MPEDSNTNDNNKRPLEDNNAVDGESDDDIGPMLPPPPGEDAPRKKK. WD repeat units follow at residues 70–108, 113–152, 157–198, 203–242, and 258–301; these read MHRD…IEFV, SHLS…MINM, YKPK…KPLH, MHSK…ALPD, and RKKK…REYD. The PPIase cyclophilin-type domain maps to 475 to 629; sequence LGTSAIIRTT…DDIKIINIDI (155 aa).

Belongs to the cyclophilin-type PPIase family.

The enzyme catalyses [protein]-peptidylproline (omega=180) = [protein]-peptidylproline (omega=0). In terms of biological role, PPIases accelerate the folding of proteins. It catalyzes the cis-trans isomerization of proline imidic peptide bonds in oligopeptides. This chain is Peptidyl-prolyl cis-trans isomerase cyp15 (cyp15), found in Rhizopus delemar (strain RA 99-880 / ATCC MYA-4621 / FGSC 9543 / NRRL 43880) (Mucormycosis agent).